The sequence spans 432 residues: Enolase (432 aa).

Gln163 is a binding site for (2R)-2-phosphoglycerate. The Proton donor role is filled by Glu205. The Mg(2+) site is built by Asp242, Glu287, and Asp314. Residues Lys339, Arg368, Ser369, and Lys390 each contribute to the (2R)-2-phosphoglycerate site. Lys339 (proton acceptor) is an active-site residue.

This sequence belongs to the enolase family. Requires Mg(2+) as cofactor.

It is found in the cytoplasm. The protein resides in the secreted. Its subcellular location is the cell surface. The enzyme catalyses (2R)-2-phosphoglycerate = phosphoenolpyruvate + H2O. It functions in the pathway carbohydrate degradation; glycolysis; pyruvate from D-glyceraldehyde 3-phosphate: step 4/5. In terms of biological role, catalyzes the reversible conversion of 2-phosphoglycerate (2-PG) into phosphoenolpyruvate (PEP). It is essential for the degradation of carbohydrates via glycolysis. This chain is Enolase, found in Myxococcus xanthus (strain DK1622).